The chain runs to 199 residues: Recombination protein RecR (199 aa).

A C4-type zinc finger spans residues 59–74 (CLNCGNVGTSDICALC). Positions 82-176 (GELCVVEDVA…KLTSLAQGVP (95 aa)) constitute a Toprim domain.

Belongs to the RecR family.

In terms of biological role, may play a role in DNA repair. It seems to be involved in an RecBC-independent recombinational process of DNA repair. It may act with RecF and RecO. The sequence is that of Recombination protein RecR from Ruegeria sp. (strain TM1040) (Silicibacter sp.).